The chain runs to 314 residues: Vacuolar membrane protein EC1118_1N9_3125g (314 aa).

The interval 32–60 (KPTSSVVSETSSKSLPSLTSSAFSTSSGA) is disordered. The chain crosses the membrane as a helical span at residues 93-113 (VYIAVGAVIGAIFISILIWWL). Phosphoserine occurs at positions 148, 254, and 274. Residues 240–309 (EERKLNLNRP…PSMFLDDVLN (70 aa)) form a disordered region. A compositionally biased stretch (basic and acidic residues) spans 254–269 (SPERKEKKINSMEGYH).

This sequence belongs to the PRM5 family.

Its subcellular location is the vacuole membrane. This Saccharomyces cerevisiae (strain Lalvin EC1118 / Prise de mousse) (Baker's yeast) protein is Vacuolar membrane protein EC1118_1N9_3125g.